The primary structure comprises 394 residues: NAD(P)H-quinone oxidoreductase subunit H (394 aa).

This sequence belongs to the complex I 49 kDa subunit family. As to quaternary structure, NDH-1 can be composed of about 15 different subunits; different subcomplexes with different compositions have been identified which probably have different functions.

The protein localises to the cellular thylakoid membrane. The enzyme catalyses a plastoquinone + NADH + (n+1) H(+)(in) = a plastoquinol + NAD(+) + n H(+)(out). The catalysed reaction is a plastoquinone + NADPH + (n+1) H(+)(in) = a plastoquinol + NADP(+) + n H(+)(out). Functionally, NDH-1 shuttles electrons from an unknown electron donor, via FMN and iron-sulfur (Fe-S) centers, to quinones in the respiratory and/or the photosynthetic chain. The immediate electron acceptor for the enzyme in this species is believed to be plastoquinone. Couples the redox reaction to proton translocation, and thus conserves the redox energy in a proton gradient. Cyanobacterial NDH-1 also plays a role in inorganic carbon-concentration. The sequence is that of NAD(P)H-quinone oxidoreductase subunit H from Prochlorococcus marinus (strain SARG / CCMP1375 / SS120).